The following is a 73-amino-acid chain: uncharacterized protein (73 aa).

The first 21 residues, 1–21 (MTLFSSLSSLSTGSLKSSVSS), serve as a signal peptide directing secretion. Residues 1–38 (MTLFSSLSSLSTGSLKSSVSSIETGSSSGSFGSNETSG) are compositionally biased toward low complexity. Residues 1–43 (MTLFSSLSSLSTGSLKSSVSSIETGSSSGSFGSNETSGWGSHH) are disordered. A glycan (N-linked (GlcNAc...) asparagine) is linked at N34.

The protein localises to the secreted. This is an uncharacterized protein from Dictyostelium discoideum (Social amoeba).